A 549-amino-acid chain; its full sequence is Chaperonin GroEL 2 (549 aa).

ATP-binding positions include 30-33, Lys51, 87-91, Gly415, 479-481, and Asp495; these read TLGP, DGTTT, and NAA.

It belongs to the chaperonin (HSP60) family. Forms a cylinder of 14 subunits composed of two heptameric rings stacked back-to-back. Interacts with the co-chaperonin GroES.

Its subcellular location is the cytoplasm. It catalyses the reaction ATP + H2O + a folded polypeptide = ADP + phosphate + an unfolded polypeptide.. Together with its co-chaperonin GroES, plays an essential role in assisting protein folding. The GroEL-GroES system forms a nano-cage that allows encapsulation of the non-native substrate proteins and provides a physical environment optimized to promote and accelerate protein folding. In Polaromonas naphthalenivorans (strain CJ2), this protein is Chaperonin GroEL 2.